A 180-amino-acid chain; its full sequence is Inorganic pyrophosphatase (180 aa).

3 residues coordinate substrate: K30, R44, and Y56. D66, D71, and D103 together coordinate Mg(2+). A substrate-binding site is contributed by Y142.

This sequence belongs to the PPase family. As to quaternary structure, homohexamer. Mg(2+) serves as cofactor.

It is found in the cytoplasm. It catalyses the reaction diphosphate + H2O = 2 phosphate + H(+). In terms of biological role, catalyzes the hydrolysis of inorganic pyrophosphate (PPi) forming two phosphate ions. This chain is Inorganic pyrophosphatase, found in Buchnera aphidicola subsp. Schizaphis graminum (strain Sg).